We begin with the raw amino-acid sequence, 488 residues long: Altronate oxidoreductase (488 aa).

18-29 (VIQFGEGNFLRA) contributes to the NAD(+) binding site.

The protein belongs to the mannitol dehydrogenase family. UxaB subfamily.

It carries out the reaction D-altronate + NAD(+) = keto-D-tagaturonate + NADH + H(+). Its pathway is carbohydrate metabolism; pentose and glucuronate interconversion. The chain is Altronate oxidoreductase from Pectobacterium carotovorum subsp. carotovorum (strain PC1).